The following is a 183-amino-acid chain: MARIGYARTFTTDQNLAAQIAALRNAGCEVIREEQKSGASLEGRPQLMTILDFIHAGETFVITRIDRLARSLRDLQVIVDRLKAKGAHLVATEQPADTSTAAGKAFFDMLGVFAGFETNLRRERQAEGIAAARKRGIYKGRPPKIDRAEILLRLQQGQGPSKIARDLGISRGTVYQVRKGVFE.

Residues 2–136 (ARIGYARTFT…EGIAAARKRG (135 aa)) enclose the Resolvase/invertase-type recombinase catalytic domain.

Belongs to the site-specific recombinase resolvase family.

The polypeptide is Integrase-like protein y4lS (Sinorhizobium fredii (strain NBRC 101917 / NGR234)).